We begin with the raw amino-acid sequence, 484 residues long: Phosphomevalonate kinase erg8 (484 aa).

Residues 54 to 77 (REAASGSAHGRSDTPQAEGNVHGD) form a disordered region. 184–194 (AHKTGLGSSAA) is an ATP binding site.

Belongs to the GHMP kinase family. Mevalonate kinase subfamily.

The catalysed reaction is (R)-5-phosphomevalonate + ATP = (R)-5-diphosphomevalonate + ADP. It functions in the pathway isoprenoid biosynthesis; isopentenyl diphosphate biosynthesis via mevalonate pathway; isopentenyl diphosphate from (R)-mevalonate: step 2/3. Phosphomevalonate kinase; part of the second module of ergosterol biosynthesis pathway that includes the middle steps of the pathway. Erg8 converts 5-phosphomevalonate to 5-diphosphomevalonate. The second module is carried out in the vacuole and involves the formation of farnesyl diphosphate, which is also an important intermediate in the biosynthesis of ubiquinone, dolichol, heme and prenylated proteins. Activity by the mevalonate kinase erg12 (AFUA_4G07780) first converts mevalonate into 5-phosphomevalonate. 5-phosphomevalonate is then further converted to 5-diphosphomevalonate by the phosphomevalonate kinase erg8 (AFUA_5G10680). The diphosphomevalonate decarboxylase mvd1 (AFUA_4G07130) then produces isopentenyl diphosphate. The isopentenyl-diphosphate delta-isomerase idi1 (AFUA_6G11160) then catalyzes the 1,3-allylic rearrangement of the homoallylic substrate isopentenyl (IPP) to its highly electrophilic allylic isomer, dimethylallyl diphosphate (DMAPP). Finally the farnesyl diphosphate synthase erg20 (AFUA_5G02450) catalyzes the sequential condensation of isopentenyl pyrophosphate with dimethylallyl pyrophosphate, and then with the resultant geranylpyrophosphate to the ultimate product farnesyl pyrophosphate. The polypeptide is Phosphomevalonate kinase erg8 (Aspergillus fumigatus (strain ATCC MYA-4609 / CBS 101355 / FGSC A1100 / Af293) (Neosartorya fumigata)).